The primary structure comprises 96 residues: Prokineticin Bm8-f (96 aa).

The N-terminal stretch at 1–19 (MKCFAQIVVLLLVIAFSHG) is a signal peptide. Intrachain disulfides connect Cys26–Cys38, Cys32–Cys50, Cys37–Cys78, Cys60–Cys86, and Cys80–Cys95.

The protein belongs to the AVIT (prokineticin) family. In terms of tissue distribution, expressed by the skin glands.

The protein resides in the secreted. In terms of biological role, potent agonist for both PKR1/PROKR1 and PKR2/PROKR2, and inducer of a potent and long-lasting hyperalgesia. Also potentiates capsaicin-induced TRPV1 current, when tested on DRG neurons. At subnanomolar concentrations, this protein both induces potent chemotaxis of macrophages and stimulates LPS-induced production of the pro-inflammatory cytokines IL-1 and IL-12. In vivo, potently stimulates the contraction of the guinea-pig gastrointestinal (GI) smooth muscle (nanomolar concentration). In Bombina maxima (Giant fire-bellied toad), this protein is Prokineticin Bm8-f.